Reading from the N-terminus, the 76-residue chain is ATP synthase subunit c (76 aa).

2 consecutive transmembrane segments (helical) span residues 8–28 (LLAAGLAMGLGAIGPGIGVGI) and 55–75 (VAFAESIAIFALVISIVLIFV).

The protein belongs to the ATPase C chain family. F-type ATPases have 2 components, F(1) - the catalytic core - and F(0) - the membrane proton channel. F(1) has five subunits: alpha(3), beta(3), gamma(1), delta(1), epsilon(1). F(0) has three main subunits: a(1), b(2) and c(10-14). The alpha and beta chains form an alternating ring which encloses part of the gamma chain. F(1) is attached to F(0) by a central stalk formed by the gamma and epsilon chains, while a peripheral stalk is formed by the delta and b chains.

It localises to the cell membrane. Functionally, f(1)F(0) ATP synthase produces ATP from ADP in the presence of a proton or sodium gradient. F-type ATPases consist of two structural domains, F(1) containing the extramembraneous catalytic core and F(0) containing the membrane proton channel, linked together by a central stalk and a peripheral stalk. During catalysis, ATP synthesis in the catalytic domain of F(1) is coupled via a rotary mechanism of the central stalk subunits to proton translocation. In terms of biological role, key component of the F(0) channel; it plays a direct role in translocation across the membrane. A homomeric c-ring of between 10-14 subunits forms the central stalk rotor element with the F(1) delta and epsilon subunits. This Dehalococcoides mccartyi (strain ATCC BAA-2266 / KCTC 15142 / 195) (Dehalococcoides ethenogenes (strain 195)) protein is ATP synthase subunit c.